The following is a 450-amino-acid chain: UPF0210 protein CPE1497 (450 aa).

The protein belongs to the UPF0210 family. Homodimer.

The chain is UPF0210 protein CPE1497 from Clostridium perfringens (strain 13 / Type A).